The following is a 37-amino-acid chain: Large ribosomal subunit protein bL36 (37 aa).

Belongs to the bacterial ribosomal protein bL36 family.

The chain is Large ribosomal subunit protein bL36 from Synechococcus sp. (strain CC9605).